Reading from the N-terminus, the 25-residue chain is Superoxide dismutase [Mn], mitochondrial (25 aa).

Histidine 9 contributes to the Mn(2+) binding site.

Belongs to the iron/manganese superoxide dismutase family. As to quaternary structure, homotetramer. Requires Mn(2+) as cofactor.

The protein localises to the mitochondrion matrix. It carries out the reaction 2 superoxide + 2 H(+) = H2O2 + O2. In terms of biological role, destroys superoxide anion radicals which are normally produced within the cells and which are toxic to biological systems. The polypeptide is Superoxide dismutase [Mn], mitochondrial (Alternaria alternata (Alternaria rot fungus)).